A 376-amino-acid chain; its full sequence is S-adenosylmethionine synthase (376 aa).

His15 is a binding site for ATP. Residue Asp17 participates in Mg(2+) binding. Glu43 is a K(+) binding site. Residues Glu56 and Gln92 each contribute to the L-methionine site. The flexible loop stretch occupies residues 92–102; that stretch reads QSKEIANQVDR. ATP contacts are provided by residues 156 to 158, Asp231, 237 to 238, Ala254, and Lys258; these read DMK and RK. Asp231 provides a ligand contact to L-methionine. Position 262 (Lys262) interacts with L-methionine.

This sequence belongs to the AdoMet synthase family. As to quaternary structure, homotetramer; dimer of dimers. The cofactor is Mg(2+). K(+) serves as cofactor.

Its subcellular location is the cytoplasm. The enzyme catalyses L-methionine + ATP + H2O = S-adenosyl-L-methionine + phosphate + diphosphate. It functions in the pathway amino-acid biosynthesis; S-adenosyl-L-methionine biosynthesis; S-adenosyl-L-methionine from L-methionine: step 1/1. Its function is as follows. Catalyzes the formation of S-adenosylmethionine (AdoMet) from methionine and ATP. The overall synthetic reaction is composed of two sequential steps, AdoMet formation and the subsequent tripolyphosphate hydrolysis which occurs prior to release of AdoMet from the enzyme. This Mycoplasmopsis pulmonis (strain UAB CTIP) (Mycoplasma pulmonis) protein is S-adenosylmethionine synthase.